A 724-amino-acid polypeptide reads, in one-letter code: Solute carrier organic anion transporter family member 4C1 (724 aa).

A disordered region spans residues 1-80 (MQGSKGVENP…PPGSQLSELE (80 aa)). Residues 1–101 (MQGSKGVENP…QCLQRCNNPK (101 aa)) lie on the Cytoplasmic side of the membrane. Serine 15 and serine 16 each carry phosphoserine. Position 19 is a phosphothreonine (threonine 19). Serine 24, serine 26, and serine 28 each carry phosphoserine. Polar residues predominate over residues 25 to 46 (ASPSQVEVSAVASRNQNGGSQP). A helical membrane pass occupies residues 102–122 (GFLLHYCLLALTQGIVVNGLV). Over 123-141 (NISISTIEKRYEMKSSLTG) the chain is Extracellular. A helical membrane pass occupies residues 142-162 (LISSSYDISFCVLSLFVSFFG). Residues 163-168 (ERGHKP) are Cytoplasmic-facing. Residues 169 to 193 (RWLAFASFMIGLGALVFSLPHFFSG) form a helical membrane-spanning segment. Topologically, residues 194–218 (RYELGTIFEDTCLTRNSTRCASSTS) are extracellular. Residues 219–249 (LLSNYFYVFVLGQLLLGTGGTPLYTLGTAFI) form a helical membrane-spanning segment. The Cytoplasmic segment spans residues 250 to 269 (DDSVPTHKSSLYIGIGYSMS). A helical transmembrane segment spans residues 270-290 (ILGPAIGYVLGGQLLTMYIDV). The Extracellular segment spans residues 291–306 (AMGQSSDLTEDDPRWL). The chain crosses the membrane as a helical span at residues 307 to 331 (GAWWIGFLLAWLFAWSLIMPFSCFP). Residues 332–376 (KHLPGTAKIQAGKTSQTHQNNSTSFQHMDENFGKSIKDFPTAVKN) lie on the Cytoplasmic side of the membrane. The chain crosses the membrane as a helical span at residues 377–398 (LMRNTVFICLVLSTTSEALVTT). The Extracellular segment spans residues 399–418 (GFATFLPKFIENQFGLTSSF). The chain crosses the membrane as a helical span at residues 419 to 442 (AATLGGAVLIPGAALGQILGGVLV). The Cytoplasmic segment spans residues 443–446 (SKFK). The helical transmembrane segment at 447 to 470 (MKCKNTMKFALCTSGVALMLSFVF) threads the bilayer. The Extracellular portion of the chain corresponds to 471–580 (IYAKCENGPF…KTQCSNLPIF (110 aa)). In terms of domain architecture, Kazal-like spans 494–549 (GNLTAPCNANCNCLRSYYYPLCGSDGVQYFSPCFAGCLNSVSNRKPKAYYNCSCIE). Disulfide bonds link cysteine 500–cysteine 530, cysteine 506–cysteine 526, and cysteine 515–cysteine 547. A helical transmembrane segment spans residues 581–603 (LGIFFITVIFTFMAGTPITVSIL). The Cytoplasmic portion of the chain corresponds to 604–612 (RCVNHRQRS). A helical membrane pass occupies residues 613–638 (LALGVQFMLLRLLGTIPGPIIFGVTI). Over 639 to 672 (DSTCVLWDINECGTKGACWIYDNIRMAHMLVAIS) the chain is Extracellular. A helical membrane pass occupies residues 673 to 690 (VTCKVITIFFNGLAIVLY). At 691–724 (KPPPPGTEVSFQSQNVVVSTITVEEDLNKIENEG) the chain is on the cytoplasmic side.

The protein belongs to the organo anion transporter (TC 2.A.60) family. As to expression, predominantly expressed in kidney and lung but also weakly expressed in brain. Localizes primarily in the proximal straight tubules, the S3 fraction of the nephron.

It is found in the basolateral cell membrane. The protein localises to the apical cell membrane. It catalyses the reaction estrone 3-sulfate(out) = estrone 3-sulfate(in). The catalysed reaction is L-thyroxine(out) = L-thyroxine(in). The enzyme catalyses 3,3',5-triiodo-L-thyronine(out) = 3,3',5-triiodo-L-thyronine(in). It carries out the reaction chenodeoxycholate(out) = chenodeoxycholate(in). It catalyses the reaction glycocholate(out) = glycocholate(in). The catalysed reaction is L-homoarginine(in) = L-homoarginine(out). The enzyme catalyses L-arginine(in) = L-arginine(out). It carries out the reaction N(omega),N(omega)-dimethyl-L-arginine(out) = N(omega),N(omega)-dimethyl-L-arginine(in). In terms of biological role, mediates the transport of organic anions such as steroids (estrone 3-sulfate, chenodeoxycholate, glycocholate) and thyroid hormones (3,3',5-triiodo-L-thyronine (T3), L-thyroxine (T4)), in the kidney. Capable of transporting cAMP and pharmacological substances such as digoxin, ouabain and methotrexate. Transport is independent of sodium, chloride ion, and ATP. Transport activity is stimulated by an acidic extracellular environment due to increased substrate affinity to the transporter. The driving force for this transport activity is currently not known. The role of hydrogencarbonate (HCO3(-), bicarbonate) as the probable counteranion that exchanges for organic anions is still not well defined. Functions as an uptake transporter at the apical membrane, suggesting a role in renal reabsorption. Involved in the renal secretion of the uremic toxin ADMA (N(omega),N(omega)-dimethyl-L-arginine or asymmetrical dimethylarginine), which is associated to cardiovascular events and mortality, and the structurally related amino acids L-arginine and L-homoarginine (a cardioprotective biomarker). Can act bidirectionally, suggesting a dual protective role of this transport protein; exporting L-homoarginine after being synthesized in proximal tubule cells, and mediating uptake of ADMA from the blood into proximal tubule cells where it is degraded by the enzyme dimethylarginine dimethylaminohydrolase 1 (DDAH1). May be involved in sperm maturation by enabling directed movement of organic anions and compounds within or between cells. This ion-transporting process is important to maintain the strict epididymal homeostasis necessary for sperm maturation. May have a role in secretory functions since seminal vesicle epithelial cells are assumed to secrete proteins involved in decapacitation by modifying surface proteins to facilitate the acquisition of the ability to fertilize the egg. The protein is Solute carrier organic anion transporter family member 4C1 of Rattus norvegicus (Rat).